Here is a 428-residue protein sequence, read N- to C-terminus: UDP-N-acetylglucosamine 1-carboxyvinyltransferase (428 aa).

25 to 26 (KN) is a binding site for phosphoenolpyruvate. Position 102 (Arg-102) interacts with UDP-N-acetyl-alpha-D-glucosamine. Cys-126 functions as the Proton donor in the catalytic mechanism. Cys-126 carries the 2-(S-cysteinyl)pyruvic acid O-phosphothioketal modification. Positions 316 and 338 each coordinate UDP-N-acetyl-alpha-D-glucosamine.

Belongs to the EPSP synthase family. MurA subfamily.

It localises to the cytoplasm. It carries out the reaction phosphoenolpyruvate + UDP-N-acetyl-alpha-D-glucosamine = UDP-N-acetyl-3-O-(1-carboxyvinyl)-alpha-D-glucosamine + phosphate. The protein operates within cell wall biogenesis; peptidoglycan biosynthesis. Its function is as follows. Cell wall formation. Adds enolpyruvyl to UDP-N-acetylglucosamine. The sequence is that of UDP-N-acetylglucosamine 1-carboxyvinyltransferase from Anaplasma marginale (strain Florida).